Reading from the N-terminus, the 344-residue chain is MRVIRPVEHADIAALMQLAGKTGGGLTSLLANEATLAARIERALKTWSGELPKGEQGYVFVLEDSETGEVGGICAIEVAVGLNDPWYNYRVGTLVHASKELNVYNALPTLFLSNDHTGSSELCTLFLDPEWRKEGNGYLLSKSRFMFMAAFRDKFNEKVVAEMRGVIDEHGYSPFWQSLGKRFFSMDFSRADFLCGTGQKAFIAELMPKHPIYTHFLSEEAQAVIGEVHPQTAPARVVLEKEGFRYRHYIDIFDGGPTLECDIDRVRAIRKSRLVEVAEGQPALGDYPACLVANENYHHFRAALVRADPQTSRLVLTAAQLDALKCRAGDHVRLVRLCAEEKTV.

Leu125 serves as a coordination point for succinyl-CoA. Catalysis depends on His229, which acts as the Proton donor.

This sequence belongs to the arginine N-succinyltransferase family.

The catalysed reaction is succinyl-CoA + L-arginine = N(2)-succinyl-L-arginine + CoA + H(+). It participates in amino-acid degradation; L-arginine degradation via AST pathway; L-glutamate and succinate from L-arginine: step 1/5. Catalyzes the transfer of succinyl-CoA to arginine to produce N(2)-succinylarginine. The chain is Arginine N-succinyltransferase from Salmonella typhi.